Consider the following 117-residue polypeptide: Tyrosine-protein phosphatase 25 (117 aa).

Positions 1–117 constitute a Tyrosine-protein phosphatase domain; it reads WLMIIEQKCN…DLIGQSPIVV (117 aa). Asp-85 lines the substrate pocket.

It belongs to the protein-tyrosine phosphatase family.

It catalyses the reaction O-phospho-L-tyrosyl-[protein] + H2O = L-tyrosyl-[protein] + phosphate. This Styela plicata (Wrinkled sea squirt) protein is Tyrosine-protein phosphatase 25 (STY-25).